A 265-amino-acid chain; its full sequence is Probable protein VP2 (265 aa).

3 disordered regions span residues 44–110 (RLGR…DDLS), 152–171 (STRS…SDVA), and 194–265 (VQNA…CSSN). A compositionally biased stretch (pro residues) spans 48–60 (PQPPRPPGGPPGP). Low complexity predominate over residues 152-168 (STRSTSTRASRSTDGTS). Basic residues predominate over residues 221 to 242 (GKTRPRKKPRAKQKPKKRRRYR). Residues 243–265 (SSSNSSSKSNDSSDAESSTCSSN) are compositionally biased toward low complexity.

In terms of processing, phosphorylated at C-terminal serines.

This is Probable protein VP2 from Torque teno virus (isolate Human/Germany/KAV/2001) (TTV).